A 1122-amino-acid polypeptide reads, in one-letter code: RecBCD enzyme subunit RecC (1122 aa).

The protein belongs to the RecC family. As to quaternary structure, heterotrimer of RecB, RecC and RecD. All subunits contribute to DNA-binding. Interacts with YgbT (Cas1). (Microbial infection) Lambda virus GamS protein interacts with the enzyme without displacing any of the subunits.

With respect to regulation, after reacting with DNA bearing a Chi site the holoenzyme is disassembled and loses exonuclease activity, DNA unwinding and Chi-directed DNA cleavage; RecB remains complexed with ssDNA, which may prevent holoenzyme reassembly. High levels of Mg(2+) (13 mM MgCl(2+)) or incubation with DNase allow holoenzyme reassembly, suggesting it is DNA bound to RecB that prevents reassembly. (Microbial infection) RecBCD is inhibited by the lambda virus gam protein (both GamL and GamS isoforms); in vitro a short preincubation prior to adding DNA results in maximal inhibition. A helicase/nuclease that prepares dsDNA breaks (DSB) for recombinational DNA repair. Binds to DSBs and unwinds DNA via a rapid (&gt;1 kb/second) and highly processive (&gt;30 kb) ATP-dependent bidirectional helicase. Unwinds dsDNA until it encounters a Chi (crossover hotspot instigator, 5'-GCTGGTGG-3') sequence from the 3' direction. Cuts ssDNA a few nucleotides 3' to Chi site, by nicking one strand or switching the strand degraded (depending on the reaction conditions). The properties and activities of the enzyme are changed at Chi. The Chi-altered holoenzyme produces a long 3'-ssDNA overhang which facilitates RecA-binding to the ssDNA for homologous DNA recombination and repair. Holoenzyme degrades any linearized DNA that is unable to undergo homologous recombination. In the holoenzyme this subunit almost certainly recognizes the wild-type Chi sequence, when added to isolated RecB increases its ATP-dependent helicase processivity. The RecBC complex requires the RecD subunit for nuclease activity, but can translocate along ssDNA in both directions. The RecBCD complex does not unwind G-quadruplex DNA. This Escherichia coli (strain K12) protein is RecBCD enzyme subunit RecC.